A 439-amino-acid polypeptide reads, in one-letter code: Vacuolar zinc transporter COT1 (439 aa).

The Cytoplasmic portion of the chain corresponds to 1–9; that stretch reads MKLGSKQVK. Residues 10 to 30 form a helical membrane-spanning segment; sequence IISLLLLDTVFFGIEITTGYL. Residues 31-33 lie on the Vacuolar side of the membrane; sequence SHS. Residues 34–54 form a helical membrane-spanning segment; sequence LALIADSFHMLNDIISLVVAL. Over 55 to 76 the chain is Cytoplasmic; it reads WAVNVAKNRNPDSTYTYGWKRA. Residues 77–97 traverse the membrane as a helical segment; the sequence is EILGALINAVFLIALCVSILI. Residues 98-113 lie on the Vacuolar side of the membrane; that stretch reads EALQRIIAPPVIENPK. The chain crosses the membrane as a helical span at residues 114–134; that stretch reads FVLYVGVAGLISNTVGLFLFH. Residues 135–244 are Cytoplasmic-facing; that stretch reads DNDQEHGHGH…RKRSLNMHGV (110 aa). 3 short sequence motifs (histidine repeat) span residues 140 to 144, 165 to 169, and 219 to 223; these read HGHGH, HTHAH, and SSHTI. Polar residues predominate over residues 207–230; that stretch reads PENASKTPSYSTSSHTIASGGNYT. Positions 207 to 231 are disordered; sequence PENASKTPSYSTSSHTIASGGNYTE. The residue at position 225 (serine 225) is a Phosphoserine. Residues 245 to 265 traverse the membrane as a helical segment; that stretch reads FLHVLGDALGNIGVMLSAFFI. Topologically, residues 266 to 274 are vacuolar; it reads WKTDYSWKY. Residues 275 to 295 form a helical membrane-spanning segment; the sequence is YTDPLVSLIITGIIFSSALPL. Residues 296-439 are Cytoplasmic-facing; the sequence is SCKASKILLQ…CNTADCLEDH (144 aa). A Glycyl lysine isopeptide (Lys-Gly) (interchain with G-Cter in ubiquitin) cross-link involves residue lysine 301. Positions 388-402 are enriched in basic and acidic residues; it reads TSTERAGDSQGDHLQ. Residues 388–408 form a disordered region; it reads TSTERAGDSQGDHLQNDPLSL.

This sequence belongs to the cation diffusion facilitator (CDF) transporter (TC 2.A.4) family. SLC30A subfamily.

The protein resides in the vacuole membrane. It catalyses the reaction Zn(2+)(in) = Zn(2+)(out). Its function is as follows. Vacuolar transporter that regulates zinc homeostasis by mediating zinc transport and storage into the vacuole. Plays a role in resistance to zinc shock resulting from sudden influx of zinc into cytoplasm. May also participate in the regulation of cobalt levels under normal physiological conditions and may be important in the supply of metal that is required for metalloenzyme or cofactor synthesis. Involved in the resistance to cobalt and rhodium ions. In Saccharomyces cerevisiae (strain ATCC 204508 / S288c) (Baker's yeast), this protein is Vacuolar zinc transporter COT1.